Reading from the N-terminus, the 154-residue chain is Cindoxin (154 aa).

Residues 3–145 (ALILYGTETG…TAEEWAREIL (143 aa)) enclose the Flavodoxin-like domain. FMN contacts are provided by residues 9-13 (TETGN) and 89-120 (VFGL…TQVG).

FMN serves as cofactor.

In terms of biological role, involved in the degradation of cineol (eucalyptol). The FMN protein, cindoxin, shuttles electrons between the FAD-containing cindoxin reductase (CinB) and 1,8-cineole 2-endo-monooxygenase (CinA). This Citrobacter braakii protein is Cindoxin (cinC).